Here is a 134-residue protein sequence, read N- to C-terminus: Profilin-5 (134 aa).

This sequence belongs to the profilin family. Occurs in many kinds of cells as a complex with monomeric actin in a 1:1 ratio. As to expression, specifically expressed in mature pollen grains. Expressed in germinating pollen grains. Expressed in growing pollen tubes (at protein level).

It is found in the cytoplasm. It localises to the cytoskeleton. Functionally, binds to actin monomers and regulates the organization of the actin cytoskeleton. At high concentrations, profilin prevents the polymerization of actin, whereas it enhances it at low concentrations. At low concentrations, associates with the poly-proline motif of formins to enhance actin filament elongation rate. Acts redundantly with PRF4 to regulate apical actin polymerization at the tip of pollen tube and control polarized pollen tube growth. Functions probably by favoring formin-mediated actin polymerization at pollen tube tips. The chain is Profilin-5 from Arabidopsis thaliana (Mouse-ear cress).